Consider the following 496-residue polypeptide: Putative BTB/POZ domain and WD-repeat protein R61 (496 aa).

Residues 8–78 enclose the BTB domain; it reads SNINLILNDE…MFSDIDIYKN (71 aa). WD repeat units lie at residues 149–189, 208–248, 250–285, 291–330, 333–371, and 422–464; these read KFPR…FNSK, IFDN…KEFQ, DYKI…RKVL, KSIG…IIKW, VSKS…KILE, and MYFS…DIIY.

This sequence belongs to the mimivirus BTB/WD family.

The protein is Putative BTB/POZ domain and WD-repeat protein R61 of Acanthamoeba polyphaga (Amoeba).